A 313-amino-acid chain; its full sequence is N-acetyl-gamma-glutamyl-phosphate reductase (313 aa).

The active site involves Cys-117.

The protein belongs to the NAGSA dehydrogenase family. Type 2 subfamily.

Its subcellular location is the cytoplasm. It carries out the reaction N-acetyl-L-glutamate 5-semialdehyde + phosphate + NADP(+) = N-acetyl-L-glutamyl 5-phosphate + NADPH + H(+). Its pathway is amino-acid biosynthesis; L-arginine biosynthesis; N(2)-acetyl-L-ornithine from L-glutamate: step 3/4. Its function is as follows. Catalyzes the NADPH-dependent reduction of N-acetyl-5-glutamyl phosphate to yield N-acetyl-L-glutamate 5-semialdehyde. This chain is N-acetyl-gamma-glutamyl-phosphate reductase, found in Burkholderia orbicola (strain MC0-3).